A 314-amino-acid chain; its full sequence is tRNA-cytidine(32) 2-sulfurtransferase (314 aa).

Positions 49–54 (SGGKDS) match the PP-loop motif motif. The [4Fe-4S] cluster site is built by Cys124, Cys127, and Cys215.

Belongs to the TtcA family. In terms of assembly, homodimer. Mg(2+) serves as cofactor. The cofactor is [4Fe-4S] cluster.

It localises to the cytoplasm. It carries out the reaction cytidine(32) in tRNA + S-sulfanyl-L-cysteinyl-[cysteine desulfurase] + AH2 + ATP = 2-thiocytidine(32) in tRNA + L-cysteinyl-[cysteine desulfurase] + A + AMP + diphosphate + H(+). The protein operates within tRNA modification. Catalyzes the ATP-dependent 2-thiolation of cytidine in position 32 of tRNA, to form 2-thiocytidine (s(2)C32). The sulfur atoms are provided by the cysteine/cysteine desulfurase (IscS) system. This chain is tRNA-cytidine(32) 2-sulfurtransferase, found in Pasteurella multocida (strain Pm70).